The sequence spans 70 residues: UPF0519 protein B (70 aa).

It belongs to the UPF0519 family.

The polypeptide is UPF0519 protein B (sigN122) (Dictyostelium discoideum (Social amoeba)).